We begin with the raw amino-acid sequence, 483 residues long: O-acetyltransferase pboB (483 aa).

It belongs to the fumigaclavine B O-acetyltransferase family. Monomer.

It participates in secondary metabolite biosynthesis. In terms of biological role, O-acetyltransferase; part of the gene cluster that mediates the biosynthesis of protubonine B, a hydroxylated and diacetylated cyclo-L-Trp-L-Leu derivative. Within the pathway, pboB catalyzes the acetylation of protubonine C at N-1 of the indoline ring to produce protubonine B. The first step of the protubonine B synthesis is performed by the nonribosomal peptide synthetase pboA that catalyzes the formation of cyclo-L-Trp-L-Leu by condensing L-Leu with L-Trp. The flavin-dependent monooxygenase pboD is responsible for hydroxylation at C-3 of the indole ring and subsequent formation of the pyrrolidine ring, leadind to protubonine D. Protubonine D is further diacetylated by two acetyltransferases, pboB and pboC, to form the final product protubonine B via protubonine C. This is O-acetyltransferase pboB from Aspergillus ustus.